We begin with the raw amino-acid sequence, 201 residues long: UPF0056 membrane protein PYRAB13050 (201 aa).

A run of 6 helical transmembrane segments spans residues 8 to 28 (FAVL…VPIF), 49 to 69 (ITVL…FKFF), 73 to 93 (VDAF…EMLS), 111 to 131 (VAVI…TTVM), 140 to 160 (PIVI…LASG), and 181 to 201 (LILT…AFGI).

Belongs to the UPF0056 (MarC) family.

It is found in the cell membrane. This chain is UPF0056 membrane protein PYRAB13050, found in Pyrococcus abyssi (strain GE5 / Orsay).